The following is a 547-amino-acid chain: Chaperonin GroEL 1 (547 aa).

Residues 30–33, K51, 87–91, G415, and D496 each bind ATP; these read TLGP and DGTTT.

Belongs to the chaperonin (HSP60) family. Forms a cylinder of 14 subunits composed of two heptameric rings stacked back-to-back. Interacts with the co-chaperonin GroES.

It is found in the cytoplasm. It catalyses the reaction ATP + H2O + a folded polypeptide = ADP + phosphate + an unfolded polypeptide.. In terms of biological role, together with its co-chaperonin GroES, plays an essential role in assisting protein folding. The GroEL-GroES system forms a nano-cage that allows encapsulation of the non-native substrate proteins and provides a physical environment optimized to promote and accelerate protein folding. This chain is Chaperonin GroEL 1, found in Rhodopseudomonas palustris (strain ATCC BAA-98 / CGA009).